The following is an 830-amino-acid chain: MKQKLRSSVQIILLFALTAVGLTGQSYPGKPKIIRCRSLEKETFSCWWKPGSDGGLPTNYTLFYSKDSEEKIYECPDYGMSGPNSCYFDKNHTNPWTTYNITVMAMNEIGSNSSDPQYVDVTSIVQPDAPVNLSLETKTSASTTYLLAKWSPPPLADVTSNSHVYRYELRLKPEEKEEWETVSVGVQTQYKVNRLQAGVKYVVQVRCVLDIGEWSEWSSERHIHIPNGESPPEKPTIIKCRSPEKETFTCWWKPGSDGGHPTNYTLLYSKEGEERVYECPDYKTAGPNSCYFDKKHTSFWTIYNITVKATNEIGSNVSDPLYVDVTYIVQTDPPVNVTLELKKTVNRKPYLVLTWSPPPLADVRSGWLTLDYELRLKPEEAEEWETIFVGQQTHYKMFSLNPGKKYIVQIHCKPDHHGSWSEWSLEKYLQIPTDFRIKDMVVWIIVGVLSSLICLVMSWTMVLKGYRMIAFILPPVPGPKIKGIDTHLLETGKSEELLSALGCHGFPPTSDCEELLIEYLEVEDSEDQQLMPSHDNGHPSKNAKMIAKETDSDSGRGSCDSPSLLSEKCRESRAILSTLQTQDIRDVQENNGRRHWETQCIASEQKILLFNNESTKSPIWPAAQLPDNQPPMFAYHSTVDVHKITLCTIDVNIAPVLVENEEQHQPQYPITETVHDNMEKHREVENLYSKTDQTTVQVKQNRPNDKSPFSKPKLMDYVEVHKVRQDEVAAVLLKHKENSGKIEKYTVPGTSKEYTKVSTVVDHNILVLMPDSRIQHIPVSQEPAMEMSQNLQQGQTEKNMSYCLTVPSECKRETSASEYMDPSSFIPAFK.

A signal peptide spans 1-23 (MKQKLRSSVQIILLFALTAVGLT). At 24-439 (GQSYPGKPKI…QIPTDFRIKD (416 aa)) the chain is on the extracellular side. 4 Fibronectin type-III domains span residues 30 to 128 (KPKI…VQPD), 129 to 228 (APVN…IPNG), 231 to 331 (PPEK…IVQT), and 333 to 434 (PPVN…IPTD). Cys36 and Cys46 are joined by a disulfide. An N-linked (GlcNAc...) asparagine glycan is attached at Asn59. An intrachain disulfide couples Cys75 to Cys86. N-linked (GlcNAc...) asparagine glycans are attached at residues Asn91, Asn100, Asn112, Asn132, Asn263, Asn304, Asn316, and Asn336. Zn(2+)-binding residues include Asp415 and His417. The short motif at 420 to 424 (WSEWS) is the WSXWS motif element. A helical transmembrane segment spans residues 440–460 (MVVWIIVGVLSSLICLVMSWT). The Cytoplasmic segment spans residues 461 to 830 (MVLKGYRMIA…DPSSFIPAFK (370 aa)). The short motif at 472–480 (ILPPVPGPK) is the Box 1 motif element.

The protein belongs to the type I cytokine receptor family. Type 1 subfamily.

It is found in the membrane. Functionally, this is a receptor for the anterior pituitary hormone prolactin. This Columba livia (Rock dove) protein is Prolactin receptor (PRLR).